A 1020-amino-acid chain; its full sequence is Protein SCAR3 (1020 aa).

Disordered regions lie at residues 167-198 (NLSQGNKKFQKDKKHCKMKKKKTSSRSRDMSR), 351-382 (DEKPSYGEGIGGVDFHSKDNENDKSESGLRKR), and 802-827 (DYLSDNHSLSNSEPWEESSDSHGRKE). The segment covering 174-191 (KFQKDKKHCKMKKKKTSS) has biased composition (basic residues). Residues 365-382 (FHSKDNENDKSESGLRKR) show a composition bias toward basic and acidic residues. The segment covering 802 to 814 (DYLSDNHSLSNSE) has biased composition (polar residues). The region spanning 954–972 (ETGDFLQQIRTQQFNLRPV) is the WH2 domain.

The protein belongs to the SCAR/WAVE family. Binds BRK1. Interacts with SPK1, ABI1, ABI2, ABI3 and ABI4. As to expression, expressed in expanding cotyledons, expanding leaves and expanding siliques containing developing embryos. Detected in unopened flower buds. Reduced expression in mature leaves and mature cotyledons.

It is found in the cytoplasm. The protein resides in the cytoskeleton. Involved in regulation of actin and microtubule organization. Part of a WAVE complex that activates the Arp2/3 complex. Regulates trichome branch positioning and expansion. The sequence is that of Protein SCAR3 (SCAR3) from Arabidopsis thaliana (Mouse-ear cress).